The sequence spans 609 residues: Sulfite reductase [NADPH] flavoprotein alpha-component (609 aa).

In terms of domain architecture, Flavodoxin-like spans Ile72–Val210. FMN is bound by residues Ser78–Ala83 and Ser125–Gly128. One can recognise an FAD-binding FR-type domain in the interval Ser244–Pro458. FAD contacts are provided by residues Thr332, Gln366, Arg396–Ser399, Thr414–Gly416, Tyr420, and Gly429–Ser432. NADP(+) is bound by residues Ser529 to Arg530, Lys535 to Gln539, and Asp571. Tyr609 contributes to the FAD binding site.

This sequence belongs to the NADPH-dependent sulphite reductase flavoprotein subunit CysJ family. The protein in the N-terminal section; belongs to the flavodoxin family. In the C-terminal section; belongs to the flavoprotein pyridine nucleotide cytochrome reductase family. As to quaternary structure, alpha(8)-beta(8). The alpha component is a flavoprotein, the beta component is a hemoprotein. The cofactor is FAD. FMN serves as cofactor.

It carries out the reaction hydrogen sulfide + 3 NADP(+) + 3 H2O = sulfite + 3 NADPH + 4 H(+). Its pathway is sulfur metabolism; hydrogen sulfide biosynthesis; hydrogen sulfide from sulfite (NADPH route): step 1/1. Component of the sulfite reductase complex that catalyzes the 6-electron reduction of sulfite to sulfide. This is one of several activities required for the biosynthesis of L-cysteine from sulfate. The flavoprotein component catalyzes the electron flow from NADPH -&gt; FAD -&gt; FMN to the hemoprotein component. This Pectobacterium atrosepticum (strain SCRI 1043 / ATCC BAA-672) (Erwinia carotovora subsp. atroseptica) protein is Sulfite reductase [NADPH] flavoprotein alpha-component.